The chain runs to 379 residues: Putative F-box protein At5g62660 (379 aa).

Residues 35–84 (ALVAPEIPLDLLIEILTKLPAKSLMRFKCVSKLWSSLIRSRFFSNCYLTV) enclose the F-box domain.

The protein is Putative F-box protein At5g62660 of Arabidopsis thaliana (Mouse-ear cress).